The sequence spans 252 residues: Phosphate import ATP-binding protein PstB 1 (252 aa).

Residues 6–247 enclose the ABC transporter domain; sequence LQVSDLSVYY…PQHKETEDYI (242 aa). ATP is bound at residue 38-45; sequence GPSGSGKS.

The protein belongs to the ABC transporter superfamily. Phosphate importer (TC 3.A.1.7) family. In terms of assembly, the complex is composed of two ATP-binding proteins (PstB), two transmembrane proteins (PstC and PstA) and a solute-binding protein (PstS).

It localises to the cell membrane. It catalyses the reaction phosphate(out) + ATP + H2O = ADP + 2 phosphate(in) + H(+). In terms of biological role, part of the ABC transporter complex PstSACB involved in phosphate import. Responsible for energy coupling to the transport system. In Streptococcus pneumoniae (strain ATCC BAA-255 / R6), this protein is Phosphate import ATP-binding protein PstB 1.